A 185-amino-acid polypeptide reads, in one-letter code: Ribosome-recycling factor (185 aa).

It belongs to the RRF family.

Its subcellular location is the cytoplasm. Functionally, responsible for the release of ribosomes from messenger RNA at the termination of protein biosynthesis. May increase the efficiency of translation by recycling ribosomes from one round of translation to another. In Salinispora tropica (strain ATCC BAA-916 / DSM 44818 / JCM 13857 / NBRC 105044 / CNB-440), this protein is Ribosome-recycling factor.